Reading from the N-terminus, the 57-residue chain is MAVPKKKTSKSKRDKRRATWRHKAAVEAQKALSLGKSILTGRSTFVYPTAEEEDEEE.

Residues 1-23 (MAVPKKKTSKSKRDKRRATWRHK) form a disordered region.

The protein belongs to the bacterial ribosomal protein bL32 family.

The chain is Large ribosomal subunit protein bL32 from Trichormus variabilis (strain ATCC 29413 / PCC 7937) (Anabaena variabilis).